The sequence spans 144 residues: D-aminoacyl-tRNA deacylase (144 aa).

The Gly-cisPro motif, important for rejection of L-amino acids motif lies at 136–137 (GP).

This sequence belongs to the DTD family. As to quaternary structure, homodimer.

The protein localises to the cytoplasm. It carries out the reaction glycyl-tRNA(Ala) + H2O = tRNA(Ala) + glycine + H(+). The enzyme catalyses a D-aminoacyl-tRNA + H2O = a tRNA + a D-alpha-amino acid + H(+). Functionally, an aminoacyl-tRNA editing enzyme that deacylates mischarged D-aminoacyl-tRNAs. Also deacylates mischarged glycyl-tRNA(Ala), protecting cells against glycine mischarging by AlaRS. Acts via tRNA-based rather than protein-based catalysis; rejects L-amino acids rather than detecting D-amino acids in the active site. By recycling D-aminoacyl-tRNA to D-amino acids and free tRNA molecules, this enzyme counteracts the toxicity associated with the formation of D-aminoacyl-tRNA entities in vivo and helps enforce protein L-homochirality. The polypeptide is D-aminoacyl-tRNA deacylase (Mannheimia succiniciproducens (strain KCTC 0769BP / MBEL55E)).